A 69-amino-acid polypeptide reads, in one-letter code: Sec-independent protein translocase protein TatA (69 aa).

A helical transmembrane segment spans residues 1–21 (MFGKLGMPELVLIFAVALVIF).

Belongs to the TatA/E family. Forms a complex with TatC.

Its subcellular location is the cell membrane. Its function is as follows. Part of the twin-arginine translocation (Tat) system that transports large folded proteins containing a characteristic twin-arginine motif in their signal peptide across membranes. TatA could form the protein-conducting channel of the Tat system. The protein is Sec-independent protein translocase protein TatA of Alkaliphilus metalliredigens (strain QYMF).